The sequence spans 628 residues: Kinesin-like protein KIN-10B (628 aa).

The region spanning 20-340 (NVRVVLRVRP…VSLAARSRHI (321 aa)) is the Kinesin motor domain. ATP is bound at residue 114–121 (GATGSGKT). The interval 496–519 (SPIDSNAKPNSAHGSSPFLKPMTP) is disordered. The segment covering 498–509 (IDSNAKPNSAHG) has biased composition (polar residues).

The protein belongs to the TRAFAC class myosin-kinesin ATPase superfamily. Kinesin family. KIN-10 subfamily.

The protein is Kinesin-like protein KIN-10B of Arabidopsis thaliana (Mouse-ear cress).